A 413-amino-acid polypeptide reads, in one-letter code: Tyrosine--tRNA ligase (413 aa).

Tyr34 contributes to the L-tyrosine binding site. Residues 39–48 (CTAQSLHVGN) carry the 'HIGH' region motif. L-tyrosine is bound by residues Tyr171 and Gln175. The short motif at 231 to 235 (KMGKT) is the 'KMSKS' region element. Lys234 contributes to the ATP binding site. The 66-residue stretch at 346-411 (IPITELLVTI…GKKCHILVKI (66 aa)) folds into the S4 RNA-binding domain.

The protein belongs to the class-I aminoacyl-tRNA synthetase family. TyrS type 1 subfamily. Homodimer.

The protein localises to the cytoplasm. The enzyme catalyses tRNA(Tyr) + L-tyrosine + ATP = L-tyrosyl-tRNA(Tyr) + AMP + diphosphate + H(+). Its function is as follows. Catalyzes the attachment of tyrosine to tRNA(Tyr) in a two-step reaction: tyrosine is first activated by ATP to form Tyr-AMP and then transferred to the acceptor end of tRNA(Tyr). The polypeptide is Tyrosine--tRNA ligase (Orientia tsutsugamushi (strain Ikeda) (Rickettsia tsutsugamushi)).